The following is a 2005-amino-acid chain: Sodium channel protein type 2 subunit alpha (2005 aa).

Residues 1 to 129 are Cytoplasmic-facing; it reads MARSVLVPPG…KLAIKILVHS (129 aa). Serine 4 carries the phosphoserine modification. The interval 28 to 61 is disordered; sequence RIAEEKAKRPKQERKDEDDENGPKPNSDLEAGKS. Lysine 38 participates in a covalent cross-link: Glycyl lysine isopeptide (Lys-Gly) (interchain with G-Cter in SUMO1). One copy of the I repeat lies at 111–456; the sequence is ILTPFNPIRK…QQMLEQLKKQ (346 aa). Residues 130–148 traverse the membrane as a helical segment; it reads LFNVLIMCTILTNCVFMTM. Topologically, residues 149–155 are extracellular; the sequence is SNPPDWT. A helical membrane pass occupies residues 156-176; that stretch reads KNVEYTFTGIYTFESLIKILA. The Cytoplasmic segment spans residues 177-190; it reads RGFCLEDFTFLRNP. A helical membrane pass occupies residues 191–208; the sequence is WNWLDFTVITFAYVTEFV. Residues 209-214 are Extracellular-facing; that stretch reads NLGNVS. An N-linked (GlcNAc...) asparagine glycan is attached at asparagine 212. Residues 215–231 traverse the membrane as a helical segment; it reads ALRTFRVLRALKTISVI. Topologically, residues 232-250 are cytoplasmic; the sequence is PGLKTIVGALIQSVKKLSD. The chain crosses the membrane as a helical span at residues 251–270; that stretch reads VMILTVFCLSVFALIGLQLF. Residues 271–369 lie on the Extracellular side of the membrane; sequence MGNLRNKCLQ…PNYGYTSFDT (99 aa). Cysteine 278 and cysteine 338 are disulfide-bonded. Asparagine 285, asparagine 291, asparagine 297, asparagine 303, asparagine 308, and asparagine 340 each carry an N-linked (GlcNAc...) asparagine glycan. The segment at residues 370 to 394 is an intramembrane region (pore-forming); sequence FSWAFLSLFRLMTQDFWENLYQLTL. Residues 395–401 lie on the Extracellular side of the membrane; that stretch reads RAAGKTY. A helical transmembrane segment spans residues 402–422; sequence MIFFVLVIFLGSFYLINLILA. At 423-759 the chain is on the cytoplasmic side; that stretch reads VVAMAYEEQN…HVVNLVVMDP (337 aa). Serine 468, serine 471, serine 484, serine 526, serine 528, serine 531, serine 553, serine 554, and serine 558 each carry phosphoserine. Residues 494–529 form a disordered region; the sequence is SSKSEKELKNRRKKKKQKEQAGEEEKEDAVRKSASE. Positions 511-529 are enriched in basic and acidic residues; the sequence is KEQAGEEEKEDAVRKSASE. A Phosphoserine; by PKC; in vitro modification is found at serine 554. A phosphoserine; by PKC; in vitro mark is found at serine 573 and serine 576. 6 positions are modified to phosphoserine: serine 589, serine 610, serine 623, serine 687, serine 688, and serine 721. Positions 591-634 are disordered; sequence NDFADDEHSTFEDNDSRRDSLFVPHRHGERRPSNVSQASRASRG. A compositionally biased stretch (basic and acidic residues) spans 596-610; it reads DEHSTFEDNDSRRDS. One copy of the II repeat lies at 741-1013; sequence CCKPWLKVKH…QIAVGRMQKG (273 aa). Residues 760-778 traverse the membrane as a helical segment; that stretch reads FVDLAITICIVLNTLFMAM. The Extracellular segment spans residues 779–789; the sequence is EHYPMTEQFSS. Residues 790–809 form a helical membrane-spanning segment; it reads VLSVGNLVFTGIFTAEMFLK. Residues 810-823 lie on the Cytoplasmic side of the membrane; that stretch reads IIAMDPYYYFQEGW. A helical transmembrane segment spans residues 824-843; the sequence is NIFDGFIVSLSLMELGLANV. The Extracellular portion of the chain corresponds to 844–845; the sequence is EG. A helical transmembrane segment spans residues 846–863; that stretch reads LSVLRSFRLLRVFKLAKS. The Cytoplasmic segment spans residues 864–879; it reads WPTLNMLIKIIGNSVG. The helical transmembrane segment at 880–898 threads the bilayer; that stretch reads ALGNLTLVLAIIVFIFAVV. At 899 to 927 the chain is on the extracellular side; it reads GMQLFGKSYKECVCKISNDCELPRWHMHH. A disulfide bridge connects residues cysteine 912 and cysteine 918. A binds SCN2B region spans residues 917–918; sequence DC. An intramembrane region (pore-forming) is located at residues 928–948; the sequence is FFHSFLIVFRVLCGEWIETMW. The Extracellular segment spans residues 949–961; it reads DCMEVAGQTMCLT. A disulfide bridge links cysteine 950 with cysteine 959. A helical membrane pass occupies residues 962–982; that stretch reads VFMMVMVIGNLVVLNLFLALL. The Cytoplasmic segment spans residues 983 to 1209; sequence LSSFSSDNLA…TCYKIVEHNW (227 aa). Residues 1120–1166 are disordered; sequence EEFSSESDMEESKEKLNATSSSEGSTVDIGAPAEGEQPEAEPEESLE. A compositionally biased stretch (acidic residues) spans 1155–1166; sequence EQPEAEPEESLE. An III repeat occupies 1190 to 1504; the sequence is KGKLWWNLRK…KKYYNAMKKL (315 aa). The chain crosses the membrane as a helical span at residues 1210-1227; that stretch reads FETFIVFMILLSSGALAF. The Extracellular portion of the chain corresponds to 1228–1240; that stretch reads EDIYIEQRKTIKT. Residues 1241-1259 form a helical membrane-spanning segment; the sequence is MLEYADKVFTYIFILEMLL. Topologically, residues 1260–1273 are cytoplasmic; it reads KWVAYGFQMYFTNA. A helical membrane pass occupies residues 1274 to 1292; sequence WCWLDFLIVDVSLVSLTAN. The Extracellular portion of the chain corresponds to 1293–1300; that stretch reads ALGYSELG. Residues 1301–1319 form a helical membrane-spanning segment; that stretch reads AIKSLRTLRALRPLRALSR. The Cytoplasmic portion of the chain corresponds to 1320 to 1336; the sequence is FEGMRVVVNALLGAIPS. Residues 1337–1356 traverse the membrane as a helical segment; the sequence is IMNVLLVCLIFWLIFSIMGV. Residues 1357–1408 are Extracellular-facing; the sequence is NLFAGKFYHCINYTTGEMFDVSVVNNYSECQALIESNQTARWKNVKVNFDNV. A disulfide bond links cysteine 1366 and cysteine 1386. Asparagine 1368, asparagine 1382, and asparagine 1393 each carry an N-linked (GlcNAc...) asparagine glycan. The segment at residues 1409 to 1430 is an intramembrane region (pore-forming); that stretch reads GLGYLSLLQVATFKGWMDIMYA. Topologically, residues 1431 to 1447 are extracellular; sequence AVDSRNVELQPKYEDNL. The helical transmembrane segment at 1448-1469 threads the bilayer; that stretch reads YMYLYFVIFIIFGSFFTLNLFI. The Cytoplasmic segment spans residues 1470-1532; the sequence is GVIIDNFNQQ…MVFDFVTKQV (63 aa). Position 1506 is a phosphoserine; by PKC (serine 1506). The stretch at 1513–1811 is one IV repeat; the sequence is IPRPANKFQG…WEKFDPDATQ (299 aa). Residues 1533–1550 traverse the membrane as a helical segment; that stretch reads FDISIMILICLNMVTMMV. Residues 1551-1561 are Extracellular-facing; sequence ETDDQSQEMTN. A helical transmembrane segment spans residues 1562 to 1580; sequence ILYWINLVFIVLFTGECVL. Residues 1581-1592 are Cytoplasmic-facing; sequence KLISLRHYYFTI. A helical membrane pass occupies residues 1593 to 1610; it reads GWNIFDFVVVILSIVGMF. The Extracellular portion of the chain corresponds to 1611–1623; sequence LAELIEKYFVSPT. Residues 1624–1640 traverse the membrane as a helical segment; it reads LFRVIRLARIGRILRLI. The Cytoplasmic segment spans residues 1641-1659; sequence KGAKGIRTLLFALMMSLPA. The helical transmembrane segment at 1660–1677 threads the bilayer; the sequence is LFNIGLLLFLVMFIYAIF. The Extracellular portion of the chain corresponds to 1678-1699; sequence GMSNFAYVKREVGIDDMFNFET. An intramembrane region (pore-forming) is located at residues 1700 to 1722; sequence FGNSMICLFQITTSAGWDGLLAP. The Extracellular segment spans residues 1723-1752; it reads ILNSGPPDCDPEKDHPGSSVKGDCGNPSVG. An intrachain disulfide couples cysteine 1731 to cysteine 1746. A helical transmembrane segment spans residues 1753–1775; sequence IFFFVSYIIISFLVVVNMYIAVI. The Cytoplasmic segment spans residues 1776–2005; sequence LENFSVATEE…KGKDIRESKK (230 aa). The region spanning 1905-1934 is the IQ domain; the sequence is EEVSAIVIQRAYRRYLLKQKVKKVSSIYKK. Phosphoserine is present on serine 1930. A compositionally biased stretch (basic and acidic residues) spans 1933 to 1964; sequence KKDKGKEDEGTPIKEDIITDKLNENSTPEKTD. Positions 1933 to 2005 are disordered; that stretch reads KKDKGKEDEG…KGKDIRESKK (73 aa). A phosphothreonine mark is found at threonine 1943, threonine 1963, and threonine 1966. Serine 1971 is modified (phosphoserine). Basic and acidic residues predominate over residues 1979-2005; sequence TKPEKEKFEKDKSEKEDKGKDIRESKK.

The protein belongs to the sodium channel (TC 1.A.1.10) family. Nav1.2/SCN2A subfamily. As to quaternary structure, heterooligomer of a large alpha subunit and a smaller beta subunit. Heterooligomer with SCN2B or SCN4B; disulfide-linked. Heterooligomer with SCN1B or SCN3B; non-covalently linked. Interacts with NEDD4L. Interacts with CALM. Interacts with TMEM233. Interacts with the conotoxin GVIIJ. Interacts with the scorpion toxin BMK M1. May be ubiquitinated by NEDD4L; which would promote its endocytosis. Post-translationally, phosphorylation at Ser-1506 by PKC in a highly conserved cytoplasmic loop slows inactivation of the sodium channel and reduces peak sodium currents. In terms of processing, sumoylated at Lys-38. Sumoylation is induced by hypoxia, increases voltage-gated sodium current and mediates the early response to acute hypoxia in neurons. Sumoylated SCN2A is located at the cell membrane. As to expression, expressed in brain (at protein level). Expressed in cerebellar granule neurons (at protein level).

Its subcellular location is the cell membrane. It carries out the reaction Na(+)(in) = Na(+)(out). Functionally, mediates the voltage-dependent sodium ion permeability of excitable membranes. Assuming opened or closed conformations in response to the voltage difference across the membrane, the protein forms a sodium-selective channel through which Na(+) ions may pass in accordance with their electrochemical gradient. Implicated in the regulation of hippocampal replay occurring within sharp wave ripples (SPW-R) important for memory. The polypeptide is Sodium channel protein type 2 subunit alpha (Rattus norvegicus (Rat)).